A 323-amino-acid chain; its full sequence is Lipid A biosynthesis myristoyltransferase (323 aa).

Residues 23 to 43 (YWGAWLGVAAMAGIALTPPKF) form a helical membrane-spanning segment. The HXXXXD motif signature appears at 139-144 (HGWAVD).

It belongs to the LpxL/LpxM/LpxP family. LpxM subfamily.

The protein localises to the cell inner membrane. It catalyses the reaction alpha-Kdo-(2-&gt;4)-alpha-Kdo-(2-&gt;6)-(dodecanoyl)-lipid IVA (E. coli) + tetradecanoyl-[ACP] = alpha-Kdo-(2-&gt;4)-alpha-Kdo-(2-&gt;6)-lipid A (E. coli) + holo-[ACP]. The catalysed reaction is (9Z)-hexadecenoyl-(Kdo)2-lipid IVA (E. coli) + tetradecanoyl-[ACP] = ((9Z)-hexadecenoyl-tetradecanoyl)-(Kdo)2-lipid A + holo-[ACP]. It participates in glycolipid biosynthesis; KDO(2)-lipid A biosynthesis; KDO(2)-lipid A from CMP-3-deoxy-D-manno-octulosonate and lipid IV(A): step 4/4. The protein operates within bacterial outer membrane biogenesis; lipopolysaccharide biosynthesis. Functionally, catalyzes the transfer of myristate from myristoyl-[acyl-carrier-protein] (ACP) to Kdo(2)-(lauroyl)-lipid IV(A) to form Kdo(2)-lipid A. Can probably also catalyze the transfer of myristate to Kdo(2)-(palmitoleoyl)-lipid IV(A) to form the cold-adapted Kdo(2)-lipid A. In vitro, can acylate Kdo(2)-lipid IV(A), but acylation of (KDO)2-(lauroyl)-lipid IV(A) is about 100 times faster. In vitro, can use lauroyl-ACP but displays a slight kinetic preference for myristoyl-ACP. The protein is Lipid A biosynthesis myristoyltransferase of Escherichia coli (strain K12).